The sequence spans 125 residues: DNA-directed RNA polymerase II subunit RPB9 (125 aa).

At methionine 1 the chain carries N-acetylmethionine. The Zn(2+) site is built by cysteine 17, cysteine 20, cysteine 39, cysteine 42, cysteine 86, cysteine 89, cysteine 114, and cysteine 119. A C4-type zinc finger spans residues 17-42 (CQECNNMLYPKEDKENRILLYACRNC). The TFIIS-type zinc-finger motif lies at 82–124 (EDHPCQKCGHKEAVFFQSHSARAEDAMRLYYVCTAPHCGHRWT).

It belongs to the archaeal RpoM/eukaryotic RPA12/RPB9/RPC11 RNA polymerase family. Component of the RNA polymerase II (Pol II) core complex consisting of 12 subunits: a ten-subunit catalytic core composed of POLR2A/RPB1, POLR2B/RPB2, POLR2C/RPB3, POLR2I/RPB9, POLR2J/RPB11, POLR2E/RPABC1, POLR2F/RPABC2, POLR2H/RPABC3, POLR2K/RPABC4 and POLR2L/RPABC5 and a mobile stalk composed of two subunits POLR2D/RPB4 and POLR2G/RPB7, protruding from the core and functioning primarily in transcription initiation. Part of Pol II(G) complex, in which Pol II core associates with an additional subunit POLR2M; unlike conventional Pol II, Pol II(G) functions as a transcriptional repressor. Part of TBP-based Pol II pre-initiation complex (PIC), in which Pol II core assembles with general transcription factors and other specific initiation factors including GTF2E1, GTF2E2, GTF2F1, GTF2F2, TCEA1, ERCC2, ERCC3, GTF2H2, GTF2H3, GTF2H4, GTF2H5, GTF2A1, GTF2A2, GTF2B and TBP; this large multi-subunit PIC complex mediates DNA unwinding and targets Pol II core to the transcription start site where the first phosphodiester bond forms.

The protein resides in the nucleus. The protein localises to the nucleolus. Its function is as follows. DNA-dependent RNA polymerase catalyzes the transcription of DNA into RNA using the four ribonucleoside triphosphates as substrates. Component of RNA polymerase II which synthesizes mRNA precursors and many functional non-coding RNAs. Pol II is the central component of the basal RNA polymerase II transcription machinery. It is composed of mobile elements that move relative to each other. POLR2I/RPB9 is part of the upper jaw surrounding the central large cleft and thought to grab the incoming DNA template. In Bos taurus (Bovine), this protein is DNA-directed RNA polymerase II subunit RPB9 (POLR2I).